A 338-amino-acid polypeptide reads, in one-letter code: Glyceraldehyde-3-phosphate dehydrogenase (338 aa).

NAD(+)-binding positions include 13–14, D35, and R80; that span reads RI. Residues 151–153, T182, 211–212, and R234 contribute to the D-glyceraldehyde 3-phosphate site; these read SCT and TG. C152 functions as the Nucleophile in the catalytic mechanism. N316 lines the NAD(+) pocket.

Belongs to the glyceraldehyde-3-phosphate dehydrogenase family. As to quaternary structure, homotetramer.

It is found in the cytoplasm. It carries out the reaction D-glyceraldehyde 3-phosphate + phosphate + NAD(+) = (2R)-3-phospho-glyceroyl phosphate + NADH + H(+). The protein operates within carbohydrate degradation; glycolysis; pyruvate from D-glyceraldehyde 3-phosphate: step 1/5. The protein is Glyceraldehyde-3-phosphate dehydrogenase (GPD) of Sclerotinia sclerotiorum (White mold).